The following is a 104-amino-acid chain: Large ribosomal subunit protein uL23 (104 aa).

It belongs to the universal ribosomal protein uL23 family. In terms of assembly, part of the 50S ribosomal subunit. Contacts protein L29, and trigger factor when it is bound to the ribosome.

Its function is as follows. One of the early assembly proteins it binds 23S rRNA. One of the proteins that surrounds the polypeptide exit tunnel on the outside of the ribosome. Forms the main docking site for trigger factor binding to the ribosome. The sequence is that of Large ribosomal subunit protein uL23 from Leptospira borgpetersenii serovar Hardjo-bovis (strain JB197).